The primary structure comprises 209 residues: Uracil phosphoribosyltransferase (209 aa).

Residues Arg-79, Arg-104, and 131-139 each bind 5-phospho-alpha-D-ribose 1-diphosphate; that span reads DPMLATGGS. Uracil-binding positions include Ile-194 and 199–201; that span reads GDA. Asp-200 provides a ligand contact to 5-phospho-alpha-D-ribose 1-diphosphate.

Belongs to the UPRTase family. Mg(2+) is required as a cofactor.

It catalyses the reaction UMP + diphosphate = 5-phospho-alpha-D-ribose 1-diphosphate + uracil. Its pathway is pyrimidine metabolism; UMP biosynthesis via salvage pathway; UMP from uracil: step 1/1. Its activity is regulated as follows. Allosterically activated by GTP. Functionally, catalyzes the conversion of uracil and 5-phospho-alpha-D-ribose 1-diphosphate (PRPP) to UMP and diphosphate. This is Uracil phosphoribosyltransferase from Oceanobacillus iheyensis (strain DSM 14371 / CIP 107618 / JCM 11309 / KCTC 3954 / HTE831).